The primary structure comprises 657 residues: UvrABC system protein B (657 aa).

The Helicase ATP-binding domain maps to 25-182 (KSIKQGNEFQ…KKLIEIQYER (158 aa)). 38–45 (GVTGSGKT) serves as a coordination point for ATP. The short motif at 91–114 (YYDYYQPEAYVPQTDTFIEKDASI) is the Beta-hairpin element. The 167-residue stretch at 429–595 (QIDDLYTEIQ…TINKEVRELI (167 aa)) folds into the Helicase C-terminal domain. The region spanning 621–656 (KKLIKEYTDEMKLAAKNLQFERAAQLRDKIEELKGK) is the UVR domain.

The protein belongs to the UvrB family. In terms of assembly, forms a heterotetramer with UvrA during the search for lesions. Interacts with UvrC in an incision complex.

It localises to the cytoplasm. Functionally, the UvrABC repair system catalyzes the recognition and processing of DNA lesions. A damage recognition complex composed of 2 UvrA and 2 UvrB subunits scans DNA for abnormalities. Upon binding of the UvrA(2)B(2) complex to a putative damaged site, the DNA wraps around one UvrB monomer. DNA wrap is dependent on ATP binding by UvrB and probably causes local melting of the DNA helix, facilitating insertion of UvrB beta-hairpin between the DNA strands. Then UvrB probes one DNA strand for the presence of a lesion. If a lesion is found the UvrA subunits dissociate and the UvrB-DNA preincision complex is formed. This complex is subsequently bound by UvrC and the second UvrB is released. If no lesion is found, the DNA wraps around the other UvrB subunit that will check the other stand for damage. The protein is UvrABC system protein B of Clostridium botulinum (strain Eklund 17B / Type B).